The chain runs to 227 residues: Cytochrome c oxidase subunit 2 (227 aa).

Topologically, residues 1 to 14 (MAHPLQLGLQDASS) are mitochondrial intermembrane. A helical transmembrane segment spans residues 15-45 (PIMEELLYFHDHALMIVFLISSLVLYTISLM). At 46–59 (LTTKLMHTSTMNAQ) the chain is on the mitochondrial matrix side. A helical membrane pass occupies residues 60 to 87 (MVETMWTILPAVILTSIALPSLRILYMT). The Mitochondrial intermembrane segment spans residues 88–227 (DEINNPLLTI…HFETWSTLTS (140 aa)). Residues histidine 161, cysteine 196, glutamate 198, cysteine 200, histidine 204, and methionine 207 each coordinate Cu cation. Position 198 (glutamate 198) interacts with Mg(2+).

It belongs to the cytochrome c oxidase subunit 2 family. As to quaternary structure, component of the cytochrome c oxidase (complex IV, CIV), a multisubunit enzyme composed of 14 subunits. The complex is composed of a catalytic core of 3 subunits MT-CO1, MT-CO2 and MT-CO3, encoded in the mitochondrial DNA, and 11 supernumerary subunits COX4I, COX5A, COX5B, COX6A, COX6B, COX6C, COX7A, COX7B, COX7C, COX8 and NDUFA4, which are encoded in the nuclear genome. The complex exists as a monomer or a dimer and forms supercomplexes (SCs) in the inner mitochondrial membrane with NADH-ubiquinone oxidoreductase (complex I, CI) and ubiquinol-cytochrome c oxidoreductase (cytochrome b-c1 complex, complex III, CIII), resulting in different assemblies (supercomplex SCI(1)III(2)IV(1) and megacomplex MCI(2)III(2)IV(2)). Found in a complex with TMEM177, COA6, COX18, COX20, SCO1 and SCO2. Interacts with TMEM177 in a COX20-dependent manner. Interacts with COX20. Interacts with COX16. Cu cation serves as cofactor.

The protein resides in the mitochondrion inner membrane. It catalyses the reaction 4 Fe(II)-[cytochrome c] + O2 + 8 H(+)(in) = 4 Fe(III)-[cytochrome c] + 2 H2O + 4 H(+)(out). Component of the cytochrome c oxidase, the last enzyme in the mitochondrial electron transport chain which drives oxidative phosphorylation. The respiratory chain contains 3 multisubunit complexes succinate dehydrogenase (complex II, CII), ubiquinol-cytochrome c oxidoreductase (cytochrome b-c1 complex, complex III, CIII) and cytochrome c oxidase (complex IV, CIV), that cooperate to transfer electrons derived from NADH and succinate to molecular oxygen, creating an electrochemical gradient over the inner membrane that drives transmembrane transport and the ATP synthase. Cytochrome c oxidase is the component of the respiratory chain that catalyzes the reduction of oxygen to water. Electrons originating from reduced cytochrome c in the intermembrane space (IMS) are transferred via the dinuclear copper A center (CU(A)) of subunit 2 and heme A of subunit 1 to the active site in subunit 1, a binuclear center (BNC) formed by heme A3 and copper B (CU(B)). The BNC reduces molecular oxygen to 2 water molecules using 4 electrons from cytochrome c in the IMS and 4 protons from the mitochondrial matrix. In Galeopterus variegatus (Malayan flying lemur), this protein is Cytochrome c oxidase subunit 2 (MT-CO2).